Reading from the N-terminus, the 263-residue chain is Ribonuclease HII (263 aa).

Positions 71–262 (KAIAGIDEVG…VKSMCCDSTN (192 aa)) constitute an RNase H type-2 domain. Residues Asp-77, Glu-78, and Asp-172 each coordinate a divalent metal cation.

The protein belongs to the RNase HII family. Mn(2+) is required as a cofactor. Requires Mg(2+) as cofactor.

Its subcellular location is the cytoplasm. It catalyses the reaction Endonucleolytic cleavage to 5'-phosphomonoester.. Endonuclease that specifically degrades the RNA of RNA-DNA hybrids. The chain is Ribonuclease HII from Streptococcus pyogenes serotype M1.